A 911-amino-acid polypeptide reads, in one-letter code: Isoleucine--tRNA ligase (911 aa).

Residues 57 to 67 carry the 'HIGH' region motif; it reads PYANGHIHIGH. L-isoleucyl-5'-AMP is bound at residue E564. The short motif at 605 to 609 is the 'KMSKS' region element; the sequence is KMSKS. ATP is bound at residue K608. Zn(2+) is bound by residues C887, C890, C902, and C905.

The protein belongs to the class-I aminoacyl-tRNA synthetase family. IleS type 1 subfamily. In terms of assembly, monomer. Zn(2+) is required as a cofactor.

It is found in the cytoplasm. The enzyme catalyses tRNA(Ile) + L-isoleucine + ATP = L-isoleucyl-tRNA(Ile) + AMP + diphosphate. Functionally, catalyzes the attachment of isoleucine to tRNA(Ile). As IleRS can inadvertently accommodate and process structurally similar amino acids such as valine, to avoid such errors it has two additional distinct tRNA(Ile)-dependent editing activities. One activity is designated as 'pretransfer' editing and involves the hydrolysis of activated Val-AMP. The other activity is designated 'posttransfer' editing and involves deacylation of mischarged Val-tRNA(Ile). This Nautilia profundicola (strain ATCC BAA-1463 / DSM 18972 / AmH) protein is Isoleucine--tRNA ligase.